The primary structure comprises 479 residues: MSIVVKNNIHWVGQRDWEVRDFHGTEYKTLRGSSYNSYLIREEKNVLIDTVDHKFSREFVQNLRNEIDLADIDYIVINHAEEDHAGALTELMAQIPDTPIYCTANAIDSINGHHHHPEWNFNVVKTGDTLDIGNGKQLIFVETPMLHWPDSMMTYLTGDAVLFSNDAFGQHYCDEHLFNDEVDQTELFEQCQRYYANILTPFSRLVTPKITEILGFNLPVDMIATSHGVVWRDNPTQIVELYLKWAADYQEDRITIFYDTMSNNTRMMADAIAQGIAETDPRVAVKIFNVARSDKNEILTNVFRSKGMLVGTSTMNNVMMPKIAGLVEEMTGLRFRNKRASAFGSHGWSGGAVDRLSTRLQDAGFEMSLSLKAKWRPDQDALELCREHGREIARQWALAPLPQSTVNTVVKEETSATTTADLGPRMQCSVCQWIYDPAKGEPMQDVAPGTPWSEVPDNFLCPECSLGKDVFDELASEAK.

The zinc metallo-hydrolase stretch occupies residues 30–210 (LRGSSYNSYL…PFSRLVTPKI (181 aa)). 6 residues coordinate Fe cation: H79, E81, D83, H147, D166, and H227. The 140-residue stretch at 254-393 (ITIFYDTMSN…LCREHGREIA (140 aa)) folds into the Flavodoxin-like domain. Residues 260-264 (TMSNN) and 342-369 (AFGS…EMSL) contribute to the FMN site. The region spanning 423–474 (GPRMQCSVCQWIYDPAKGEPMQDVAPGTPWSEVPDNFLCPECSLGKDVFDEL) is the Rubredoxin-like domain. Fe cation-binding residues include C428, C431, C461, and C464.

This sequence in the N-terminal section; belongs to the zinc metallo-hydrolase group 3 family. As to quaternary structure, homotetramer. It depends on Fe cation as a cofactor. Requires FMN as cofactor.

It localises to the cytoplasm. Its pathway is nitrogen metabolism; nitric oxide reduction. In terms of biological role, anaerobic nitric oxide reductase; uses NADH to detoxify nitric oxide (NO), protecting several 4Fe-4S NO-sensitive enzymes. Has at least 2 reductase partners, only one of which (NorW, flavorubredoxin reductase) has been identified. NO probably binds to the di-iron center; electrons enter from the NorW at rubredoxin and are transferred sequentially to the FMN center and the di-iron center. Also able to function as an aerobic oxygen reductase. This chain is Anaerobic nitric oxide reductase flavorubredoxin, found in Escherichia coli (strain SMS-3-5 / SECEC).